We begin with the raw amino-acid sequence, 508 residues long: Heat shock 70 kDa protein 14 (508 aa).

Belongs to the heat shock protein 70 family. In terms of assembly, component of ribosome-associated complex (RAC).

It localises to the cytoplasm. The protein localises to the cytosol. Its function is as follows. Component of the ribosome-associated complex (RAC), a complex involved in folding or maintaining nascent polypeptides in a folding-competent state. In Xenopus tropicalis (Western clawed frog), this protein is Heat shock 70 kDa protein 14 (hspa14).